The sequence spans 415 residues: Dynein assembly factor with WD repeat domains 1 (415 aa).

WD repeat units follow at residues 90–129, 132–174, 175–214, 217–256, 259–298, 301–340, 343–384, and 386–415; these read AHILPLTNVAFNKSGSSFITGSYDRTCKVWDTASGEELHT, GHRN…HTFR, GHTAEIVCLVFNPQSTLIATGSMDTTAKLWDIQSGEEALT, GHAAEIISLSFNTTGDRLITGSFDHTVSVWEIPSGRRIHT, GHRGEISSAQFNWDCSLIATASMDKSCKLWDSLNGKCVAT, GHDDEVLDVTFDSTGQLVATASADGTARVYSASSRKCLAK, GHEG…QVLK, and HTDEIFSCAFNYEGNTIITGSKDNTCRIWR.

Belongs to the WD repeat WDR69 family.

The protein localises to the cytoplasm. Its subcellular location is the cytoskeleton. It is found in the flagellum basal body. It localises to the flagellum axoneme. Its function is as follows. Required for axonemal dynein assembly and ciliary motility in ciliated organs, including Kupffer's vesicle, during embryogenesis. Facilitates the onset of robust cilia motility during development. This chain is Dynein assembly factor with WD repeat domains 1 (daw1), found in Xenopus laevis (African clawed frog).